The chain runs to 66 residues: MMVPVRCFSCGTVVGEHWEAFKARAETHDGDEDPADVLDDLGVDRHCCRRMLIAHQDLVDVVSPYQ.

Positions 7, 10, 47, and 48 each coordinate Zn(2+).

It belongs to the archaeal Rpo10/eukaryotic RPB10 RNA polymerase subunit family. As to quaternary structure, part of the RNA polymerase complex. Zn(2+) serves as cofactor.

The protein resides in the cytoplasm. It catalyses the reaction RNA(n) + a ribonucleoside 5'-triphosphate = RNA(n+1) + diphosphate. Its function is as follows. DNA-dependent RNA polymerase (RNAP) catalyzes the transcription of DNA into RNA using the four ribonucleoside triphosphates as substrates. This Halobacterium salinarum (strain ATCC 29341 / DSM 671 / R1) protein is DNA-directed RNA polymerase subunit Rpo10.